The following is a 364-amino-acid chain: UDP-3-O-acylglucosamine N-acyltransferase (364 aa).

Histidine 267 acts as the Proton acceptor in catalysis.

This sequence belongs to the transferase hexapeptide repeat family. LpxD subfamily. As to quaternary structure, homotrimer.

It carries out the reaction a UDP-3-O-[(3R)-3-hydroxyacyl]-alpha-D-glucosamine + a (3R)-hydroxyacyl-[ACP] = a UDP-2-N,3-O-bis[(3R)-3-hydroxyacyl]-alpha-D-glucosamine + holo-[ACP] + H(+). It participates in bacterial outer membrane biogenesis; LPS lipid A biosynthesis. Functionally, catalyzes the N-acylation of UDP-3-O-acylglucosamine using 3-hydroxyacyl-ACP as the acyl donor. Is involved in the biosynthesis of lipid A, a phosphorylated glycolipid that anchors the lipopolysaccharide to the outer membrane of the cell. This Bordetella petrii (strain ATCC BAA-461 / DSM 12804 / CCUG 43448) protein is UDP-3-O-acylglucosamine N-acyltransferase.